Reading from the N-terminus, the 112-residue chain is Cytochrome c (112 aa).

Heme c contacts are provided by C23, C26, H27, and M89.

Belongs to the cytochrome c family. Binds 1 heme c group covalently per subunit.

The protein localises to the mitochondrion intermembrane space. In terms of biological role, electron carrier protein. The oxidized form of the cytochrome c heme group can accept an electron from the heme group of the cytochrome c1 subunit of cytochrome reductase. Cytochrome c then transfers this electron to the cytochrome oxidase complex, the final protein carrier in the mitochondrial electron-transport chain. The chain is Cytochrome c (CYC1) from Chlamydomonas reinhardtii (Chlamydomonas smithii).